We begin with the raw amino-acid sequence, 736 residues long: Oxysterol-binding protein-related protein 9 (736 aa).

N-acetylalanine is present on A2. Positions 2–99 constitute a PH domain; the sequence is ASIMEGPLSK…WIHALEETIL (98 aa). The interval 231–367 is disordered; that stretch reads KSEQRPSSLP…DRDDDAEAGS (137 aa). Over residues 253-290 the composition is skewed to low complexity; sequence TPTPNSTGSGHSPPSSSLTSPSHVNLSPNTVPEFSYSS. Residues S306, S324, S325, S326, and S329 each carry the phosphoserine modification. 2 stretches are compositionally biased toward polar residues: residues 314-329 and 336-347; these read SSGSASVLTHSSSGNS and TESLNSSLSNGT. S611 is subject to Phosphoserine.

Belongs to the OSBP family. In terms of assembly, heterodimer with OSBPL11. Interacts with OSBPL10. Widely expressed.

It localises to the late endosome membrane. The protein resides in the golgi apparatus. The protein localises to the trans-Golgi network membrane. The enzyme catalyses a 1,2-diacyl-sn-glycero-3-phospho-(1D-myo-inositol 4-phosphate)(out) + a 1,2-diacyl-sn-glycero-3-phospho-L-serine(in) = a 1,2-diacyl-sn-glycero-3-phospho-(1D-myo-inositol 4-phosphate)(in) + a 1,2-diacyl-sn-glycero-3-phospho-L-serine(out). In terms of biological role, interacts with OSBPL11 to function as lipid transfer proteins. Together they form a heterodimer that localizes at the ER-trans-Golgi membrane contact sites, and exchanges phosphatidylserine (1,2-diacyl-sn-glycero-3-phospho-L-serine, PS) for phosphatidylinositol-4-phosphate (1,2-diacyl-sn-glycero-3-phospho-(1D-myo-inositol 4-phosphate), PI(4)P) between the two organelles, a step that is critical for sphingomyelin synthesis in the Golgi complex. This is Oxysterol-binding protein-related protein 9 (OSBPL9) from Homo sapiens (Human).